The chain runs to 151 residues: Phosphopantetheine adenylyltransferase (151 aa).

S9 serves as a coordination point for substrate. ATP is bound by residues 9-10 (SF) and H17. Substrate is bound by residues K41, T73, and R87. Residues 88 to 90 (GLR), E98, and 122 to 128 (TSFISSS) contribute to the ATP site.

The protein belongs to the bacterial CoaD family. Homohexamer. Requires Mg(2+) as cofactor.

The protein resides in the cytoplasm. The enzyme catalyses (R)-4'-phosphopantetheine + ATP + H(+) = 3'-dephospho-CoA + diphosphate. It functions in the pathway cofactor biosynthesis; coenzyme A biosynthesis; CoA from (R)-pantothenate: step 4/5. Its function is as follows. Reversibly transfers an adenylyl group from ATP to 4'-phosphopantetheine, yielding dephospho-CoA (dPCoA) and pyrophosphate. This is Phosphopantetheine adenylyltransferase from Flavobacterium psychrophilum (strain ATCC 49511 / DSM 21280 / CIP 103535 / JIP02/86).